The sequence spans 250 residues: 3-deoxy-manno-octulosonate cytidylyltransferase (250 aa).

The protein belongs to the KdsB family.

The protein localises to the cytoplasm. It carries out the reaction 3-deoxy-alpha-D-manno-oct-2-ulosonate + CTP = CMP-3-deoxy-beta-D-manno-octulosonate + diphosphate. The protein operates within nucleotide-sugar biosynthesis; CMP-3-deoxy-D-manno-octulosonate biosynthesis; CMP-3-deoxy-D-manno-octulosonate from 3-deoxy-D-manno-octulosonate and CTP: step 1/1. It participates in bacterial outer membrane biogenesis; lipopolysaccharide biosynthesis. In terms of biological role, activates KDO (a required 8-carbon sugar) for incorporation into bacterial lipopolysaccharide in Gram-negative bacteria. The chain is 3-deoxy-manno-octulosonate cytidylyltransferase from Syntrophobacter fumaroxidans (strain DSM 10017 / MPOB).